Here is a 285-residue protein sequence, read N- to C-terminus: Golgi phosphoprotein 3-like (285 aa).

The interval 1-42 (MTTLTHRARRTEISKNSEKKMESEEDSNWEKSPDNEDSGDSK) is disordered. A compositionally biased stretch (basic and acidic residues) spans 10 to 42 (RTEISKNSEKKMESEEDSNWEKSPDNEDSGDSK). A 1,2-diacyl-sn-glycero-3-phospho-(1D-myo-inositol 4-phosphate) is bound by residues Trp-67 and Arg-76. Residue Ser-112 is modified to Phosphoserine. Positions 157 and 160 each coordinate a 1,2-diacyl-sn-glycero-3-phospho-(1D-myo-inositol 4-phosphate). The tract at residues 176–187 (EKQNFLLFDMTT) is beta-hairpin required for oligomerization.

The protein belongs to the GOLPH3/VPS74 family. As to quaternary structure, homooligomer. Does not interact MYO18; differs from GOLPH3 by its inability to interact with MYO18. May interact with ARF1.

Its subcellular location is the golgi apparatus. The protein localises to the golgi stack membrane. The protein resides in the trans-Golgi network membrane. In terms of biological role, phosphatidylinositol-4-phosphate-binding protein that may antagonize the action of GOLPH3 which is required for the process of vesicle budding at the Golgi and anterograde transport to the plasma membrane. This chain is Golgi phosphoprotein 3-like (GOLPH3L), found in Homo sapiens (Human).